Reading from the N-terminus, the 547-residue chain is Glucose-6-phosphate isomerase 2 (547 aa).

Residue E351 is the Proton donor of the active site. Catalysis depends on residues H382 and K508.

Belongs to the GPI family.

It is found in the cytoplasm. It carries out the reaction alpha-D-glucose 6-phosphate = beta-D-fructose 6-phosphate. The protein operates within carbohydrate biosynthesis; gluconeogenesis. It participates in carbohydrate degradation; glycolysis; D-glyceraldehyde 3-phosphate and glycerone phosphate from D-glucose: step 2/4. In terms of biological role, catalyzes the reversible isomerization of glucose-6-phosphate to fructose-6-phosphate. The polypeptide is Glucose-6-phosphate isomerase 2 (Neisseria gonorrhoeae (strain ATCC 700825 / FA 1090)).